A 260-amino-acid polypeptide reads, in one-letter code: Protein TONNEAU 1a (260 aa).

A LisH domain is found at 73 to 105; it reads SGRLLSALICEYLDWAQLNHTLIVYQPESNLPK. Disordered stretches follow at residues 147–224 and 236–260; these read TQGM…EEVT and DRKT…EGRD. Residues 161–175 show a composition bias toward low complexity; it reads ESSSSLESRNPPRRS. Residues 248 to 260 are compositionally biased toward basic and acidic residues; that stretch reads NVRDGTNEEEGRD.

Interacts with CEN1, LNG1/TRM2 and LNG2/TRM1 (via C-terminus).

The protein resides in the cytoplasm. It localises to the cytoskeleton. Functionally, involved in the control of the dynamic organization of the cortical cytoskeleton. May play a role in the organization of microtubule arrays at the centrosome through interaction with centrin 1 (CEN1). In Arabidopsis thaliana (Mouse-ear cress), this protein is Protein TONNEAU 1a (TON1A).